A 547-amino-acid chain; its full sequence is Glucose-6-phosphate isomerase (547 aa).

Glutamate 352 serves as the catalytic Proton donor. Residues histidine 383 and lysine 511 contribute to the active site.

Belongs to the GPI family.

Its subcellular location is the cytoplasm. The catalysed reaction is alpha-D-glucose 6-phosphate = beta-D-fructose 6-phosphate. The protein operates within carbohydrate biosynthesis; gluconeogenesis. Its pathway is carbohydrate degradation; glycolysis; D-glyceraldehyde 3-phosphate and glycerone phosphate from D-glucose: step 2/4. Its function is as follows. Catalyzes the reversible isomerization of glucose-6-phosphate to fructose-6-phosphate. In Rhodospirillum rubrum (strain ATCC 11170 / ATH 1.1.1 / DSM 467 / LMG 4362 / NCIMB 8255 / S1), this protein is Glucose-6-phosphate isomerase.